Here is a 335-residue protein sequence, read N- to C-terminus: DNA polymerase beta (335 aa).

Lys41 is covalently cross-linked (Glycyl lysine isopeptide (Lys-Gly) (interchain with G-Cter in ubiquitin)). Lys60 lines the K(+) pocket. Lys60 is a binding site for Na(+). Residue Lys61 forms a Glycyl lysine isopeptide (Lys-Gly) (interchain with G-Cter in ubiquitin) linkage. K(+) contacts are provided by Leu62 and Val65. Na(+) contacts are provided by Leu62 and Val65. Residue Lys72 is the Nucleophile; Schiff-base intermediate with DNA; for 5'-dRP lyase activity of the active site. An N6-acetyllysine modification is found at Lys72. Residue Lys81 forms a Glycyl lysine isopeptide (Lys-Gly) (interchain with G-Cter in ubiquitin) linkage. Residue Arg83 is modified to Omega-N-methylarginine; by PRMT6. Residues Thr101, Val103, and Ile106 each coordinate K(+). Residues Thr101, Val103, and Ile106 each coordinate Na(+). Arg149 serves as a coordination point for dATP. Position 149 (Arg149) interacts with dCTP. DGTP is bound at residue Arg149. Arg149 is a binding site for dTTP. The residue at position 152 (Arg152) is an Omega-N-methylarginine; by PRMT6. DATP is bound by residues Ser180, Arg183, Gly189, and Asp190. Ser180, Arg183, Gly189, and Asp190 together coordinate dCTP. Positions 180, 183, 189, 190, and 192 each coordinate dGTP. Positions 180, 183, 189, and 190 each coordinate dTTP. The DNA-binding stretch occupies residues 183–192 (RGAESSGDMD). Asp190, Asp192, and Asp256 together coordinate Mg(2+).

Belongs to the DNA polymerase type-X family. As to quaternary structure, monomer. Binds single-stranded DNA (ssDNA). Interacts with APEX1, LIG1, LIG3, FEN1, PCNA and XRCC1. Interacts with HUWE1/ARF-BP1, STUB1/CHIP and USP47. Interacts with FAM168A. Requires Mg(2+) as cofactor. Post-translationally, methylation by PRMT6 stimulates the polymerase activity by enhancing DNA binding and processivity. Ubiquitinated at Lys-41, Lys-61 and Lys-81: monoubiquitinated by HUWE1/ARF-BP1. Monoubiquitinated protein is then the target of STUB1/CHIP, which catalyzes polyubiquitination from monoubiquitin, leading to degradation by the proteasome. USP47 mediates the deubiquitination of monoubiquitinated protein, preventing polyubiquitination by STUB1/CHIP and its subsequent degradation.

The protein resides in the nucleus. It localises to the cytoplasm. It catalyses the reaction DNA(n) + a 2'-deoxyribonucleoside 5'-triphosphate = DNA(n+1) + diphosphate. It carries out the reaction a 5'-end 2'-deoxyribose-2'-deoxyribonucleotide-DNA = (2E,4S)-4-hydroxypenten-2-al-5-phosphate + a 5'-end 5'-phospho-2'-deoxyribonucleoside-DNA + H(+). The enzyme catalyses 2'-deoxyribonucleotide-(2'-deoxyribose 5'-phosphate)-2'-deoxyribonucleotide-DNA = a 3'-end 2'-deoxyribonucleotide-(2,3-dehydro-2,3-deoxyribose 5'-phosphate)-DNA + a 5'-end 5'-phospho-2'-deoxyribonucleoside-DNA + H(+). In terms of biological role, repair polymerase that plays a key role in base-excision repair. During this process, the damaged base is excised by specific DNA glycosylases, the DNA backbone is nicked at the abasic site by an apurinic/apyrimidic (AP) endonuclease, and POLB removes 5'-deoxyribose-phosphate from the preincised AP site acting as a 5'-deoxyribose-phosphate lyase (5'-dRP lyase); through its DNA polymerase activity, it adds one nucleotide to the 3' end of the arising single-nucleotide gap. Conducts 'gap-filling' DNA synthesis in a stepwise distributive fashion rather than in a processive fashion as for other DNA polymerases. It is also able to cleave sugar-phosphate bonds 3' to an intact AP site, acting as an AP lyase. This Homo sapiens (Human) protein is DNA polymerase beta (POLB).